The primary structure comprises 953 residues: uncharacterized protein (953 aa).

Transmembrane regions (helical) follow at residues 23 to 43 (VVTS…AFLI), 103 to 123 (YLFI…PILL), 148 to 168 (GRYF…LYII), 392 to 412 (VSAI…VGMI), 435 to 455 (LLGL…MSFL), 481 to 501 (AYFA…SAAT), 540 to 560 (ISSG…LGAF), 575 to 595 (LSSM…VITF), 599 to 619 (IISP…YIAY), 642 to 662 (LFQT…LFAV), and 666 to 686 (WGPI…HLHL). Residues 910–953 (VPPPYNDVKDEANGEANGEFDTASKENNPFADPKYKEEESRSAV) are disordered. Over residues 942–953 (PKYKEEESRSAV) the composition is skewed to basic and acidic residues. S949 is subject to Phosphoserine.

Belongs to the CSC1 (TC 1.A.17) family.

The protein resides in the membrane. Its function is as follows. Acts as an osmosensitive calcium-permeable cation channel. This is an uncharacterized protein from Saccharomyces cerevisiae (strain ATCC 204508 / S288c) (Baker's yeast).